Here is a 280-residue protein sequence, read N- to C-terminus: Pantothenate synthetase (280 aa).

31–38 (MGNLHAGH) provides a ligand contact to ATP. The active-site Proton donor is histidine 38. Position 62 (glutamine 62) interacts with (R)-pantoate. Glutamine 62 lines the beta-alanine pocket. Residue 150-153 (GKKD) coordinates ATP. Glutamine 156 is a binding site for (R)-pantoate. Residues valine 179 and 187-190 (MSSR) each bind ATP.

This sequence belongs to the pantothenate synthetase family. As to quaternary structure, homodimer.

It is found in the cytoplasm. The catalysed reaction is (R)-pantoate + beta-alanine + ATP = (R)-pantothenate + AMP + diphosphate + H(+). Its pathway is cofactor biosynthesis; (R)-pantothenate biosynthesis; (R)-pantothenate from (R)-pantoate and beta-alanine: step 1/1. Functionally, catalyzes the condensation of pantoate with beta-alanine in an ATP-dependent reaction via a pantoyl-adenylate intermediate. In Xanthomonas axonopodis pv. citri (strain 306), this protein is Pantothenate synthetase.